Reading from the N-terminus, the 252-residue chain is Aspartate/glutamate leucyltransferase (252 aa).

This sequence belongs to the R-transferase family. Bpt subfamily.

The protein localises to the cytoplasm. It catalyses the reaction N-terminal L-glutamyl-[protein] + L-leucyl-tRNA(Leu) = N-terminal L-leucyl-L-glutamyl-[protein] + tRNA(Leu) + H(+). It carries out the reaction N-terminal L-aspartyl-[protein] + L-leucyl-tRNA(Leu) = N-terminal L-leucyl-L-aspartyl-[protein] + tRNA(Leu) + H(+). Functionally, functions in the N-end rule pathway of protein degradation where it conjugates Leu from its aminoacyl-tRNA to the N-termini of proteins containing an N-terminal aspartate or glutamate. This chain is Aspartate/glutamate leucyltransferase, found in Hyphomonas neptunium (strain ATCC 15444).